A 126-amino-acid polypeptide reads, in one-letter code: C2H2-type zinc-finger transcription factor M5 (126 aa).

2 disordered regions span residues 17 to 52 and 103 to 126; these read AQPD…NDNR and EKKS…RVKD. Over residues 38-48 the composition is skewed to polar residues; sequence SNGSSSGTATD. The segment at 51–76 adopts a C2H2-type 1; degenerate zinc-finger fold; that stretch reads NRCWDHGCNGKKFLNHSNLVRHRREN. The C2H2-type 2; degenerate zinc finger occupies 83–115; the sequence is FTCPMCGAYFSRSTARNQHLEKKSCNRVRRYSN. Residues 115–126 show a composition bias toward basic and acidic residues; the sequence is NGRERPRPRVKD.

Belongs to the GLI C2H2-type zinc-finger protein family.

Its subcellular location is the nucleus. Functionally, transcription factor that probably regulates the expression of the gene cluster that mediates the biosynthesis of squalestatin S1 (SQS1, also known as zaragozic acid A), a heavily oxidized fungal polyketide that offers potent cholesterol lowering activity by targeting squalene synthase (SS). The protein is C2H2-type zinc-finger transcription factor M5 of Phoma sp. (strain ATCC 20986 / MF5453).